A 322-amino-acid chain; its full sequence is CRISPR-associated endonuclease Cas1 (322 aa).

Mn(2+) is bound by residues E149, H214, and E229.

This sequence belongs to the CRISPR-associated endonuclease Cas1 family. In terms of assembly, homodimer, forms a heterotetramer with a Cas2 homodimer. The cofactor is Mg(2+). Mn(2+) serves as cofactor.

Its function is as follows. CRISPR (clustered regularly interspaced short palindromic repeat), is an adaptive immune system that provides protection against mobile genetic elements (viruses, transposable elements and conjugative plasmids). CRISPR clusters contain spacers, sequences complementary to antecedent mobile elements, and target invading nucleic acids. CRISPR clusters are transcribed and processed into CRISPR RNA (crRNA). Acts as a dsDNA endonuclease. Involved in the integration of spacer DNA into the CRISPR cassette. In Methanocaldococcus jannaschii (strain ATCC 43067 / DSM 2661 / JAL-1 / JCM 10045 / NBRC 100440) (Methanococcus jannaschii), this protein is CRISPR-associated endonuclease Cas1.